The sequence spans 458 residues: UDP-N-acetylmuramoylalanine--D-glutamate ligase (458 aa).

124-130 (GSDGKTT) contacts ATP.

The protein belongs to the MurCDEF family.

It localises to the cytoplasm. The enzyme catalyses UDP-N-acetyl-alpha-D-muramoyl-L-alanine + D-glutamate + ATP = UDP-N-acetyl-alpha-D-muramoyl-L-alanyl-D-glutamate + ADP + phosphate + H(+). It functions in the pathway cell wall biogenesis; peptidoglycan biosynthesis. In terms of biological role, cell wall formation. Catalyzes the addition of glutamate to the nucleotide precursor UDP-N-acetylmuramoyl-L-alanine (UMA). In Clostridium tetani (strain Massachusetts / E88), this protein is UDP-N-acetylmuramoylalanine--D-glutamate ligase.